We begin with the raw amino-acid sequence, 595 residues long: Myb-like protein D (595 aa).

Disordered regions lie at residues 1–47, 55–74, 82–266, and 319–445; these read MQQQ…NGLV, QQYQ…DEGE, DESQ…NNRK, and VLQK…IWTQ. Residues 19–47 are compositionally biased toward low complexity; that stretch reads DNYNNNNSNINTNNNNSINDYENQNNGLV. Acidic residues predominate over residues 60–74; it reads DQNDSFDDDSMDEGE. Composition is skewed to low complexity over residues 90-212 and 225-264; these read NNNN…ENNN and NNNN…NNNN. Positions 324–348 are enriched in basic residues; sequence TLNRNRSRSRSRSNSRSHSRSRSRS. Composition is skewed to low complexity over residues 349-368 and 376-420; these read RSLS…YSRS and NNNN…NNNN. The segment covering 423 to 434 has biased composition (basic and acidic residues); the sequence is RKSEDDNQDDGK. The HTH myb-type domain maps to 435–489; the sequence is KKHRKNAIWTQEEDEKMAQLYNKYGKSWKAIHSHFDDKTREQVQSHGQYLIRIGK. The segment at residues 462–485 is a DNA-binding region (H-T-H motif); that stretch reads WKAIHSHFDDKTREQVQSHGQYLI. The disordered stretch occupies residues 494 to 595; the sequence is HRDGRKERRK…NSSNYVNNDN (102 aa). The span at 517–595 shows a compositional bias: low complexity; it reads QQNQQNNNNN…NSSNYVNNDN (79 aa).

The protein resides in the nucleus. In Dictyostelium discoideum (Social amoeba), this protein is Myb-like protein D (mybD).